Consider the following 140-residue polypeptide: ATP synthase epsilon chain (140 aa).

Belongs to the ATPase epsilon chain family. In terms of assembly, F-type ATPases have 2 components, CF(1) - the catalytic core - and CF(0) - the membrane proton channel. CF(1) has five subunits: alpha(3), beta(3), gamma(1), delta(1), epsilon(1). CF(0) has three main subunits: a, b and c.

It localises to the cell inner membrane. Functionally, produces ATP from ADP in the presence of a proton gradient across the membrane. The protein is ATP synthase epsilon chain of Nitrosococcus oceani (strain ATCC 19707 / BCRC 17464 / JCM 30415 / NCIMB 11848 / C-107).